Consider the following 416-residue polypeptide: Homogentisate 1,2-dioxygenase (416 aa).

Histidine 275 serves as the catalytic Proton acceptor. Fe cation is bound by residues histidine 318 and glutamate 324. Tyrosine 333 and histidine 354 together coordinate homogentisate. Histidine 354 is a Fe cation binding site.

This sequence belongs to the homogentisate dioxygenase family. Hexamer; dimer of trimers. It depends on Fe cation as a cofactor.

It catalyses the reaction homogentisate + O2 = 4-maleylacetoacetate + H(+). It participates in amino-acid degradation; L-phenylalanine degradation; acetoacetate and fumarate from L-phenylalanine: step 4/6. Involved in the catabolism of homogentisate (2,5-dihydroxyphenylacetate or 2,5-OH-PhAc), a central intermediate in the degradation of phenylalanine and tyrosine. Catalyzes the oxidative ring cleavage of the aromatic ring of homogentisate to yield maleylacetoacetate. The polypeptide is Homogentisate 1,2-dioxygenase (Legionella pneumophila subsp. pneumophila (strain Philadelphia 1 / ATCC 33152 / DSM 7513)).